A 259-amino-acid polypeptide reads, in one-letter code: Glutamate racemase (259 aa).

Substrate-binding positions include 9–10 (DS) and 41–42 (YG). Catalysis depends on Cys-73, which acts as the Proton donor/acceptor. 74 to 75 (NT) is a substrate binding site. Cys-183 acts as the Proton donor/acceptor in catalysis. 184-185 (TH) serves as a coordination point for substrate.

This sequence belongs to the aspartate/glutamate racemases family.

The catalysed reaction is L-glutamate = D-glutamate. It participates in cell wall biogenesis; peptidoglycan biosynthesis. Provides the (R)-glutamate required for cell wall biosynthesis. This Shewanella frigidimarina (strain NCIMB 400) protein is Glutamate racemase.